A 357-amino-acid polypeptide reads, in one-letter code: S-adenosyl-L-methionine:benzoic acid/salicylic acid carboxyl methyltransferase 2 (357 aa).

Tyr18 contacts S-adenosyl-L-homocysteine. Gln25 is a binding site for benzoate. Cys59, Asn64, Asp96, Leu97, Ser135, and Phe136 together coordinate S-adenosyl-L-homocysteine. Trp157 is a binding site for benzoate. The Mg(2+) site is built by Asn168, Asp254, Phe256, and Asn257. Gln260 provides a ligand contact to benzoate.

This sequence belongs to the methyltransferase superfamily. Type-7 methyltransferase family. Predominantly expressed in petal limbs and tubes of corollas.

The catalysed reaction is benzoate + S-adenosyl-L-methionine = methyl benzoate + S-adenosyl-L-homocysteine. It catalyses the reaction salicylate + S-adenosyl-L-methionine = methyl salicylate + S-adenosyl-L-homocysteine. It participates in aromatic compound metabolism. Converts benzoic acid into the volatile ester methyl benzoates. This scent, mostly produced in a rhythmical, diurnal manner, attracts the pollinators. The polypeptide is S-adenosyl-L-methionine:benzoic acid/salicylic acid carboxyl methyltransferase 2 (Petunia hybrida (Petunia)).